A 356-amino-acid polypeptide reads, in one-letter code: Tyrosine recombinase XerS (356 aa).

Residues 16–121 (VMPPYVLEYY…ALSSLYKYLT (106 aa)) form the Core-binding (CB) domain. The 186-residue stretch at 169-354 (GFLDYIDSEY…INEEQKNALD (186 aa)) folds into the Tyr recombinase domain. Active-site residues include arginine 210, lysine 234, histidine 306, arginine 309, and histidine 332. The active-site O-(3'-phospho-DNA)-tyrosine intermediate is tyrosine 341.

Belongs to the 'phage' integrase family. XerS subfamily.

It localises to the cytoplasm. With respect to regulation, ftsK is required for recombination. In terms of biological role, site-specific tyrosine recombinase, which acts by catalyzing the cutting and rejoining of the recombining DNA molecules. Essential to convert dimers of the bacterial chromosome into monomers to permit their segregation at cell division. The sequence is that of Tyrosine recombinase XerS from Lactococcus lactis subsp. cremoris (strain SK11).